The chain runs to 448 residues: Zinc finger and BTB domain-containing protein 14 (448 aa).

The BTB domain occupies 36 to 102 (CDIAIVVEDV…MYTAKISVKK (67 aa)). The Nuclear localization signal signature appears at 50–66 (HRCVLAACSTYFKKLFK). Residues 130-193 (VSSPEENTQS…QEDGKSPTTT (64 aa)) are disordered. Acidic residues predominate over residues 156–167 (DTQDDEVEEIGD). 5 consecutive C2H2-type zinc fingers follow at residues 275 to 302 (IVCQ…ADRP), 303 to 330 (FVCE…GYKP), 331 to 358 (YSCE…NERP), 359 to 386 (FACH…GEKP), and 387 to 415 (FVCG…ERKQ). Residues 404–415 (RHENNMHSERKQ) show a composition bias toward basic and acidic residues. The tract at residues 404 to 425 (RHENNMHSERKQVTTANSIQSE) is disordered. The span at 416–425 (VTTANSIQSE) shows a compositional bias: polar residues.

This sequence belongs to the krueppel C2H2-type zinc-finger protein family. In terms of assembly, interacts with ZBTB21.

The protein localises to the nucleus. Transcriptional activator of the dopamine transporter (DAT), binding it's promoter at the consensus sequence 5'-CCTGCACAGTTCACGGA-3'. Binds to 5'-d(GCC)(n)-3' trinucleotide repeats in promoter regions and acts as a repressor of the FMR1 gene. Transcriptional repressor of MYC and thymidine kinase promoters. The protein is Zinc finger and BTB domain-containing protein 14 (ZBTB14) of Gallus gallus (Chicken).